The primary structure comprises 911 residues: Protein translocase subunit SecA (911 aa).

ATP is bound by residues glutamine 86, 104-108 (GEGKT), and aspartate 494. The interval 856–911 (VEGIDAPQRPAQLRFTGPSEDGQSAVTRSGTDSGATVAAGTNRRSRRQAERRGRRG) is disordered. A compositionally biased stretch (polar residues) spans 876 to 889 (DGQSAVTRSGTDSG). Basic and acidic residues predominate over residues 902 to 911 (RQAERRGRRG).

It belongs to the SecA family. Monomer and homodimer. Part of the essential Sec protein translocation apparatus which comprises SecA, SecYEG and auxiliary proteins SecDF. Other proteins may also be involved.

It is found in the cell membrane. The protein resides in the cytoplasm. It carries out the reaction ATP + H2O + cellular proteinSide 1 = ADP + phosphate + cellular proteinSide 2.. Part of the Sec protein translocase complex. Interacts with the SecYEG preprotein conducting channel. Has a central role in coupling the hydrolysis of ATP to the transfer of proteins into and across the cell membrane, serving as an ATP-driven molecular motor driving the stepwise translocation of polypeptide chains across the membrane. This chain is Protein translocase subunit SecA, found in Micrococcus luteus (strain ATCC 4698 / DSM 20030 / JCM 1464 / CCM 169 / CCUG 5858 / IAM 1056 / NBRC 3333 / NCIMB 9278 / NCTC 2665 / VKM Ac-2230) (Micrococcus lysodeikticus).